The primary structure comprises 238 residues: Fmr1 neighbor protein (238 aa).

The tract at residues 1 to 30 (MPSDRRPSQRRNRSKSRDYRGARSKVTRAD) is disordered. Over 1–79 (MPSDRRPSQR…CLQYLWARRH (79 aa)) the chain is Cytoplasmic. A compositionally biased stretch (basic and acidic residues) spans 15-30 (KSRDYRGARSKVTRAD). The helical transmembrane segment at 80–100 (LGLLLLLFWTLVILFRPVNTA) threads the bilayer. Topologically, residues 101-178 (KLPILAEAAE…VRDKPTQVLR (78 aa)) are extracellular. Residues 118-176 (MLDFFFPTACIIRDNQVVVACNNQPYLSESECLKSKCCSSTSGTIIKCYAPVRDKPTQV) enclose the P-type domain. Residues 179–199 (VFGLAAISILVLGFLPMCCCS) form a helical membrane-spanning segment. At 200–238 (MCWRRKRMNRMLKVLKKQKSKGKKPKGRKASEERALLSH) the chain is on the cytoplasmic side. Over residues 214–227 (LKKQKSKGKKPKGR) the composition is skewed to basic residues. Residues 214 to 238 (LKKQKSKGKKPKGRKASEERALLSH) form a disordered region. The segment covering 228 to 238 (KASEERALLSH) has biased composition (basic and acidic residues).

The protein localises to the membrane. The chain is Fmr1 neighbor protein from Mus musculus (Mouse).